Consider the following 202-residue polypeptide: Protein GrpE (202 aa).

Polar residues predominate over residues 1 to 14; that stretch reads MENTQENPTSQNPT. Residues 1–58 form a disordered region; sequence MENTQENPTSQNPTPADEAARQAAEAASGEPQDQARQPAAAAGEQPAQAQPAGAEAAL. The span at 21-58 shows a compositional bias: low complexity; that stretch reads RQAAEAASGEPQDQARQPAAAAGEQPAQAQPAGAEAAL.

Belongs to the GrpE family. In terms of assembly, homodimer.

It is found in the cytoplasm. Its function is as follows. Participates actively in the response to hyperosmotic and heat shock by preventing the aggregation of stress-denatured proteins, in association with DnaK and GrpE. It is the nucleotide exchange factor for DnaK and may function as a thermosensor. Unfolded proteins bind initially to DnaJ; upon interaction with the DnaJ-bound protein, DnaK hydrolyzes its bound ATP, resulting in the formation of a stable complex. GrpE releases ADP from DnaK; ATP binding to DnaK triggers the release of the substrate protein, thus completing the reaction cycle. Several rounds of ATP-dependent interactions between DnaJ, DnaK and GrpE are required for fully efficient folding. The sequence is that of Protein GrpE from Paraburkholderia phymatum (strain DSM 17167 / CIP 108236 / LMG 21445 / STM815) (Burkholderia phymatum).